The sequence spans 416 residues: L-cysteine:1D-myo-inositol 2-amino-2-deoxy-alpha-D-glucopyranoside ligase (416 aa).

C45 contributes to the Zn(2+) binding site. L-cysteinyl-5'-AMP-binding positions include 45 to 48, T60, and 83 to 85; these read CGIT and NVT. Positions 47–57 match the 'HIGH' region motif; the sequence is ITPYDSTHLGH. The 'ERGGDP' region signature appears at 191 to 196; the sequence is ERGGDP. W232 contacts L-cysteinyl-5'-AMP. C236 serves as a coordination point for Zn(2+). L-cysteinyl-5'-AMP is bound at residue 254 to 256; the sequence is GSD. H261 is a Zn(2+) binding site. V286 lines the L-cysteinyl-5'-AMP pocket. The 'KMSKS' region motif lies at 292–296; sequence KMSKS.

It belongs to the class-I aminoacyl-tRNA synthetase family. MshC subfamily. As to quaternary structure, monomer. The cofactor is Zn(2+).

The enzyme catalyses 1D-myo-inositol 2-amino-2-deoxy-alpha-D-glucopyranoside + L-cysteine + ATP = 1D-myo-inositol 2-(L-cysteinylamino)-2-deoxy-alpha-D-glucopyranoside + AMP + diphosphate + H(+). Its function is as follows. Catalyzes the ATP-dependent condensation of GlcN-Ins and L-cysteine to form L-Cys-GlcN-Ins. The chain is L-cysteine:1D-myo-inositol 2-amino-2-deoxy-alpha-D-glucopyranoside ligase from Brachybacterium faecium (strain ATCC 43885 / DSM 4810 / JCM 11609 / LMG 19847 / NBRC 14762 / NCIMB 9860 / 6-10).